Here is a 249-residue protein sequence, read N- to C-terminus: MWIGVISLFPEMFRAITEHGVTGRAVKSGLLQIECWNPRDFTHDKHRTVDDRPYGGGPGMLMMVQPLRDAIHAAKQAAGDGAKVIYLSPQGRKLTQAGVTELATNQKLILVAGRYEGIDERVIQTEVDEEWSIGDYVLSGGELPAMTLIDAVSRLVPGVLGDQASAEQDSFTDGLLDHPHYTRPELLDGLAVPEALTSGNHEVIRRWRLKQSLGRTWQRRPELINNLALTDEQESLLAEYVREVRDSVK.

Residues Gly113 and 133–138 (IGDYVL) each bind S-adenosyl-L-methionine.

It belongs to the RNA methyltransferase TrmD family. In terms of assembly, homodimer.

Its subcellular location is the cytoplasm. The catalysed reaction is guanosine(37) in tRNA + S-adenosyl-L-methionine = N(1)-methylguanosine(37) in tRNA + S-adenosyl-L-homocysteine + H(+). In terms of biological role, specifically methylates guanosine-37 in various tRNAs. The chain is tRNA (guanine-N(1)-)-methyltransferase from Aeromonas hydrophila subsp. hydrophila (strain ATCC 7966 / DSM 30187 / BCRC 13018 / CCUG 14551 / JCM 1027 / KCTC 2358 / NCIMB 9240 / NCTC 8049).